Reading from the N-terminus, the 445-residue chain is Exodeoxyribonuclease 7 large subunit (445 aa).

This sequence belongs to the XseA family. In terms of assembly, heterooligomer composed of large and small subunits.

Its subcellular location is the cytoplasm. It catalyses the reaction Exonucleolytic cleavage in either 5'- to 3'- or 3'- to 5'-direction to yield nucleoside 5'-phosphates.. Its function is as follows. Bidirectionally degrades single-stranded DNA into large acid-insoluble oligonucleotides, which are then degraded further into small acid-soluble oligonucleotides. In Limosilactobacillus reuteri (strain DSM 20016) (Lactobacillus reuteri), this protein is Exodeoxyribonuclease 7 large subunit.